Reading from the N-terminus, the 134-residue chain is Small ribosomal subunit protein uS8c (134 aa).

The protein belongs to the universal ribosomal protein uS8 family. In terms of assembly, part of the 30S ribosomal subunit.

The protein localises to the plastid. The protein resides in the chloroplast. Its function is as follows. One of the primary rRNA binding proteins, it binds directly to 16S rRNA central domain where it helps coordinate assembly of the platform of the 30S subunit. The polypeptide is Small ribosomal subunit protein uS8c (rps8) (Pelargonium hortorum (Common geranium)).